We begin with the raw amino-acid sequence, 293 residues long: Pantothenate synthetase (293 aa).

30-37 (MGYLHKGH) contributes to the ATP binding site. His37 functions as the Proton donor in the catalytic mechanism. Gln61 serves as a coordination point for (R)-pantoate. Gln61 contributes to the beta-alanine binding site. 147–150 (GEKD) lines the ATP pocket. Gln153 serves as a coordination point for (R)-pantoate. ATP-binding positions include Val176 and 184–187 (CSSR).

The protein belongs to the pantothenate synthetase family. In terms of assembly, homodimer.

It is found in the cytoplasm. The enzyme catalyses (R)-pantoate + beta-alanine + ATP = (R)-pantothenate + AMP + diphosphate + H(+). The protein operates within cofactor biosynthesis; (R)-pantothenate biosynthesis; (R)-pantothenate from (R)-pantoate and beta-alanine: step 1/1. Functionally, catalyzes the condensation of pantoate with beta-alanine in an ATP-dependent reaction via a pantoyl-adenylate intermediate. This Brucella abortus (strain S19) protein is Pantothenate synthetase.